A 494-amino-acid chain; its full sequence is MGSTSSLYAAIDLGSNSFHMLVVREVAGSIQTLTRIKRKVRLAAGLNSENALSNEAMERGWQCLRLFAERLQDIPPSQIRVVATATLRLAVNAGDFIAKAQEILGCPVQVISGEEEARLIYQGVAHTTGGADQRLVVDIGGASTELVTGTGAQTTSLFSLSMGCVTWLERYFADRNLGQENFDAAEKAAREVLRPVADELRYHGWKVCVGASGTVQALQEIMMAQGMDERITLEKLQQLKQRAIHCGRLEELEIDGLTLERALVFPSGLAILIAIFTELNIQCMTLAGGALREGLVYGMLHLAVEQDIRSRTLRNIQRRFMIDIDQAQRVAKVAANFFDQVENEWYLEAISRDLLISACQLHEIGLSVDFKQAPQHAAYLVRNLDLPGFTPAQKKLLATLLLNQTNPVDLSSLHQQNAVPPRVAEQLCRLLRLAIIFASRRRDDLVPEMTLQANHELLTLTLPQGWLTQHPLGKEIIAQESQWQSYVHWPLEVH.

Belongs to the GppA/Ppx family. GppA subfamily.

It catalyses the reaction guanosine 3'-diphosphate 5'-triphosphate + H2O = guanosine 3',5'-bis(diphosphate) + phosphate + H(+). The protein operates within purine metabolism; ppGpp biosynthesis; ppGpp from GTP: step 2/2. Functionally, catalyzes the conversion of pppGpp to ppGpp. Guanosine pentaphosphate (pppGpp) is a cytoplasmic signaling molecule which together with ppGpp controls the 'stringent response', an adaptive process that allows bacteria to respond to amino acid starvation, resulting in the coordinated regulation of numerous cellular activities. The polypeptide is Guanosine-5'-triphosphate,3'-diphosphate pyrophosphatase (Escherichia coli (strain 55989 / EAEC)).